The primary structure comprises 742 residues: MATKFPSFNQGLAQDPTTRRIWYGIATAHDFESHDGMTEEKLYQKLFSTHFGHLAIIALWVAGNLFHIAWQGNFEQFVLDPTHVRPIAHAIWDPHFGSGITEAMTQAGASGPVNIAYSGLYHWWYTIGMRTNEQLFQASIFMSILACWTLFAGWLHLQPKFRPSLAWFKNNESRLNHHLAVLFGFSSIAWTGHLVHVAIPESRGIHVGWDNWLTVLPHPAGLAPFFTLNWGAYAQNPDTLEQVFGTSEGAGTAIFTFLGGLHPQSEALWLTDIAHHHIAIGTVFIIAGHMYRNTFGIGHSLKEITEAHNTRHPLDPHKGSFGINHDGIYETVTNSLHFQLGLALAALGVATSLVAQHMGALPSYAFIARDYTTQSALYTHHQYIAMFLMVGAFAHGAIFFVRDYDPELNKDNVLARVLGTKEALISHLSWVTMILGFHTLGIYVHNDVVVAFGNPEKQILIEPVFAQFVQAAQGKMMYGFNALLSDPTSSASLAANSLPGNHYWMDLINRQDALSAFLPIGPADFLVHHAIALGLHTTALILIKGALDARGTKLIPDKKDLGYAFPCDGPGRGGTCDSSSWDAMYLAMFWALNLIAWVTFYWHWKHLAIWQGNVAQFNESGTYLMGWFRDYLWLNSAQLINGYNPFGVNSLSVWAWMFLFGHLVWATGFMFLISWRGYWQELIETLVWAHQRTPIANLVGWRDKPVALSIVQARLVGLAHFTIGNILTFGAFVIASTSGKFG.

Helical transmembrane passes span leucine 46–alanine 69, leucine 135–glutamine 158, leucine 175–isoleucine 199, isoleucine 273–tyrosine 291, leucine 336–glycine 359, serine 375–valine 401, alanine 423–histidine 445, and phenylalanine 525–isoleucine 543. [4Fe-4S] cluster-binding residues include cysteine 567 and cysteine 576. 2 helical membrane passes run alanine 583–tryptophan 604 and leucine 651–isoleucine 673. 3 residues coordinate divinyl chlorophyll a: histidine 662, methionine 670, and tyrosine 678. Residue tryptophan 679 participates in phylloquinone binding. Residues leucine 715–alanine 735 form a helical membrane-spanning segment.

The protein belongs to the PsaA/PsaB family. In terms of assembly, the PsaA/B heterodimer binds the P700 divinyl chlorophyll special pair and subsequent electron acceptors. PSI consists of a core antenna complex that captures photons, and an electron transfer chain that converts photonic excitation into a charge separation. The cyanobacterial PSI reaction center is composed of one copy each of PsaA,B,C,D,E,F,I,J,K,L,M and X, and forms trimeric complexes. The cofactor is PSI electron transfer chain: 5 divinyl chlorophyll a, 1 divinyl chlorophyll a', 2 phylloquinones and 3 4Fe-4S clusters. PSI core antenna: 90 divinyl chlorophyll a, 22 carotenoids, 3 phospholipids and 1 galactolipid. P700 is a divinyl chlorophyll a/divinyl chlorophyll a' dimer, A0 is one or more divinyl chlorophyll a, A1 is one or both phylloquinones and FX is a shared 4Fe-4S iron-sulfur center..

It localises to the cellular thylakoid membrane. The enzyme catalyses reduced [plastocyanin] + hnu + oxidized [2Fe-2S]-[ferredoxin] = oxidized [plastocyanin] + reduced [2Fe-2S]-[ferredoxin]. Functionally, psaA and PsaB bind P700, the primary electron donor of photosystem I (PSI), as well as the electron acceptors A0, A1 and FX. PSI is a plastocyanin/cytochrome c6-ferredoxin oxidoreductase, converting photonic excitation into a charge separation, which transfers an electron from the donor P700 chlorophyll pair to the spectroscopically characterized acceptors A0, A1, FX, FA and FB in turn. Oxidized P700 is reduced on the lumenal side of the thylakoid membrane by plastocyanin or cytochrome c6. In Prochlorococcus marinus subsp. pastoris (strain CCMP1986 / NIES-2087 / MED4), this protein is Photosystem I P700 chlorophyll a apoprotein A2.